Consider the following 373-residue polypeptide: 3-dehydroquinate synthase (373 aa).

Residues 107–111 (GVIGD), 131–132 (TS), lysine 144, and lysine 153 each bind NAD(+). Glutamate 186, histidine 249, and histidine 267 together coordinate Zn(2+).

Belongs to the sugar phosphate cyclases superfamily. Dehydroquinate synthase family. The cofactor is Co(2+). It depends on Zn(2+) as a cofactor. NAD(+) is required as a cofactor.

The protein localises to the cytoplasm. It carries out the reaction 7-phospho-2-dehydro-3-deoxy-D-arabino-heptonate = 3-dehydroquinate + phosphate. It functions in the pathway metabolic intermediate biosynthesis; chorismate biosynthesis; chorismate from D-erythrose 4-phosphate and phosphoenolpyruvate: step 2/7. Its function is as follows. Catalyzes the conversion of 3-deoxy-D-arabino-heptulosonate 7-phosphate (DAHP) to dehydroquinate (DHQ). In Ruegeria sp. (strain TM1040) (Silicibacter sp.), this protein is 3-dehydroquinate synthase.